Reading from the N-terminus, the 101-residue chain is Large ribosomal subunit protein bL28 (101 aa).

It belongs to the bacterial ribosomal protein bL28 family.

The sequence is that of Large ribosomal subunit protein bL28 from Methylorubrum extorquens (strain CM4 / NCIMB 13688) (Methylobacterium extorquens).